The primary structure comprises 670 residues: MHSNILPVLTSVATLLGLVQGQSQQPYRDWAKAYEAAETLVLPWTLEQQANISVRDGTAPGFVPFEPSDGVRSVQGSGKDYDNPAMRTSSNLDDRTLHELYLWPWIDGVANGLGSVMCVMNRVNGIIGCENDHIMNGILKNETGFRGFIVPDVTAPVDKAAGLLGGLGWNSGYSVSEIMAAVKNGSIPESVMTEHALRIVATQLNLLQPPEEYAFPVETADLNVRDPSSKDFIRRAGSESIVLLKNKNNTLPLRSPMSLGIFGKDAANLATGPTPQSDFSNFAGDTYDGHLITGGGSYSPAPYVVSPLDALTARAADGQGFGYKYILSDNWTVTPSESTGEGFFQTSGVSVSQYARESEHCLVFINAFGKEGSDRRTLADETGDKLVNDVADYCGSTIVIINNAGVRLVDAWIEHENVTVFTDLIPCSNQVHTNMFCFPGCPERRRSRQESGHAIVDVLFGDVNPSAKLVYTIAKSKDDYNGQICECCECDYTEGLYIDYRHFDQAGIEPRFEFGFGLCFKSDGRANIAAYTTFTHSDLTINPSTDITTLQPYATGPITEGGPSDLFEQILTISASISNTGGVAGAEVAQLYLSFPDAAKAPVRQLRGFEKVYLEPGETKFVSFPIQRRDLSIWDEQTSKWKIVGGKYGVVLGRSSRDFTVEETLELLTI.

A signal peptide spans 1 to 21 (MHSNILPVLTSVATLLGLVQG). A glycan (N-linked (GlcNAc...) asparagine) is linked at Asn-51. Residues 65 to 87 (FEPSDGVRSVQGSGKDYDNPAMR) form a disordered region. Asn-141 carries N-linked (GlcNAc...) asparagine glycosylation. Asp-152 is a catalytic residue. 4 N-linked (GlcNAc...) asparagine glycosylation sites follow: Asn-184, Asn-248, Asn-330, and Asn-417.

It belongs to the glycosyl hydrolase 3 family.

It localises to the secreted. The enzyme catalyses Hydrolysis of terminal, non-reducing beta-D-glucosyl residues with release of beta-D-glucose.. It participates in glycan metabolism; cellulose degradation. Beta-glucosidases are one of a number of cellulolytic enzymes involved in the degradation of cellulosic biomass. Catalyzes the last step releasing glucose from the inhibitory cellobiose. This chain is Probable beta-glucosidase N (bglN), found in Emericella nidulans (strain FGSC A4 / ATCC 38163 / CBS 112.46 / NRRL 194 / M139) (Aspergillus nidulans).